An 866-amino-acid chain; its full sequence is MLKGLRKKASILSLGSMASQQSTSSAINSESNYDKILTQVYDFEIALKAMDYLLDDRTKTGTDLLQNEASKNNNSEQPHAIFPLALGVMEFIEATLGFEPEVMAKAHKTLSEAENASLNNSKYNLKYQLATSMIYPPGTEFQVTFAESTLLNALLMLLTENNGMVESAKALFKLRRAYQTLDAVYKKIKESEPIFNKNLAKLKKEAAMQGNGTKSNSIITTENFSISTVDLPGYSSQTSSTSSLPQDISLMKNLEKIYLMRKSRIEGATLANNVNPERVNLFEDSNSSLTLAKQSNPKYEEQRVDNANNNNNSHDVGEDDSSSSDNEYCDASEEFDIEDTLNLPPPQIHSSAQSVLSSIETSPSSAQNASDNHLHVSTIDEYIHSGVQLCFGILQVVLSLIPPAIGKVLSIVGFRGDREVGLRLLWRTAITCRNVHGELALLFILVFYDGPVQFVDNGFRLPDQGNDKKIISLDNKATVSEAELDIILERPELYTSQLLRRARRMFPHNALWILQEGRMLAAEGDLALATKTMQDFTDDPANEIQMQQAEALLVFDRATIYIYQHEYDNAARDLIYLIDINSWSKAVYLFMAASCYLEKYRMIKMDIISVDNKESEMAKYSSLFDKYLDLALSYVPGHGHNAVGKKGGIGGSNKQMPFDKFLLRKSRHIEARKKKYPNLPTADIVGTSLIHELIYFWNGYNRMSSHDLEIALKLLGYSGAPNSEYSANTNGNLYALIEETEDEAMIRYFLQGITLRQLGSINDGLGLLDNHVISKYVISEPLHQFRFHKMTYSPYIYPTALYEKTMFVWLLRTKNTAKLDVHQAVQESKSWLKRAEIVGEGDYELSNRTGMRIKAAGDRLEQLATL.

The segment at 292–328 (AKQSNPKYEEQRVDNANNNNNSHDVGEDDSSSSDNEY) is disordered. The span at 317-328 (GEDDSSSSDNEY) shows a compositional bias: acidic residues.

The protein belongs to the IML2 family. As to quaternary structure, interacts with lipid droplet proteins.

It is found in the cytoplasm. It localises to the nucleus. Inclusion body (IB) resident protein that interacts strongly with lipid droplet (LD) proteins. Involved in LD-mediated IB clearing after protein folding stress, probably by enabling access to the IBs of an LD-stored soluble sterol derivative that acts as a chaperone in inclusion clearing. This is Inclusion body clearance protein IML2 (IML2) from Candida albicans (strain SC5314 / ATCC MYA-2876) (Yeast).